A 534-amino-acid polypeptide reads, in one-letter code: MQRRDFIRNASLALAAFGLPSLPACAASKSGQMGLRRLGQPQPFDFATLKGQARALAQAPYKSHKRVLPGRLEGLDWDQYQSIGYRQDHALWADQPGKFQAKFFHLGLYFHSPVRMFDVVDGKAQELAYDGAAFNYGKSGIKDGELPADLGFAGFRLNTRKDTDRDFAAFLGASYFRAVGKEGQYGQSARGLAIDTGMGKPEEFPDFIAYYLEQPSADSETIVVYGLLDSPSVAGAYRFAITNGDVLLMDIDSALYPRKAIERLGIAPCTSMYQVGENDRRMAWDWRPEIHDTDGLSLWTGAGEWIWRPLLNPRNLRFNMFVDRNPRGFGLLQRDRNFDHYQDDGVFYEKRPCLWVEPKGEWGEGSVQLVEIPTVDETFDNIVAFWNPKEKPQPGQELLVGYRLYWGAEPPARPPLAHCVASRTGLGGVVGKKREYFSWRFAVDFEGGELARLIDKGEVEAVVEASRGRVEIVSARPLREINGYRAMFDLVPPEGSTEQIDIRLFLRSGGKTLTETWLYQYTPPPAGAPERTLY.

Positions 1–26 form a signal peptide, tat-type signal; it reads MQRRDFIRNASLALAAFGLPSLPACA.

This sequence belongs to the OpgD/OpgG family. In terms of processing, predicted to be exported by the Tat system. The position of the signal peptide cleavage has not been experimentally proven.

The protein resides in the periplasm. The protein operates within glycan metabolism; osmoregulated periplasmic glucan (OPG) biosynthesis. In terms of biological role, probably involved in the control of the structural glucose backbone of osmoregulated periplasmic glucans (OPGs). This is Glucans biosynthesis protein D from Stenotrophomonas maltophilia (strain R551-3).